We begin with the raw amino-acid sequence, 227 residues long: Ribosomal RNA large subunit methyltransferase E (227 aa).

S-adenosyl-L-methionine-binding residues include G78, W80, D103, D119, and D143. K183 serves as the catalytic Proton acceptor.

Belongs to the class I-like SAM-binding methyltransferase superfamily. RNA methyltransferase RlmE family.

The protein localises to the cytoplasm. The enzyme catalyses uridine(2552) in 23S rRNA + S-adenosyl-L-methionine = 2'-O-methyluridine(2552) in 23S rRNA + S-adenosyl-L-homocysteine + H(+). Its function is as follows. Specifically methylates the uridine in position 2552 of 23S rRNA at the 2'-O position of the ribose in the fully assembled 50S ribosomal subunit. The sequence is that of Ribosomal RNA large subunit methyltransferase E from Rickettsia felis (strain ATCC VR-1525 / URRWXCal2) (Rickettsia azadi).